The primary structure comprises 56 residues: Large ribosomal subunit protein bL33 (56 aa).

This sequence belongs to the bacterial ribosomal protein bL33 family.

The polypeptide is Large ribosomal subunit protein bL33 (Beutenbergia cavernae (strain ATCC BAA-8 / DSM 12333 / CCUG 43141 / JCM 11478 / NBRC 16432 / NCIMB 13614 / HKI 0122)).